A 67-amino-acid polypeptide reads, in one-letter code: uncharacterized protein (67 aa).

This is an uncharacterized protein from Enterobacteria phage T4 (Bacteriophage T4).